A 294-amino-acid polypeptide reads, in one-letter code: Shikimate kinase (294 aa).

87-97 (PLAGGLKSSSA) contacts ATP.

It belongs to the GHMP kinase family. Archaeal shikimate kinase subfamily.

The protein resides in the cytoplasm. It catalyses the reaction shikimate + ATP = 3-phosphoshikimate + ADP + H(+). The protein operates within metabolic intermediate biosynthesis; chorismate biosynthesis; chorismate from D-erythrose 4-phosphate and phosphoenolpyruvate: step 5/7. The protein is Shikimate kinase (aroK) of Methanosarcina acetivorans (strain ATCC 35395 / DSM 2834 / JCM 12185 / C2A).